The following is a 492-amino-acid chain: NADH-quinone oxidoreductase subunit N (492 aa).

A run of 14 helical transmembrane segments spans residues 13 to 33 (MLPV…GFWL), 43 to 63 (ILFV…APWA), 82 to 102 (AALL…LVSL), 110 to 132 (VSFA…IAFS), 136 to 155 (IVML…LATL), 169 to 189 (FLLG…LYGA), 210 to 230 (IGIL…KIAL), 245 to 265 (PTLV…AGML), 272 to 292 (LAAG…TLVI), 306 to 326 (LLAY…LGDT), 331 to 351 (AALG…LAVV), 377 to 397 (AVAL…AGFF), 410 to 430 (GYLL…VYYL), and 457 to 477 (VAVA…NLWY).

Belongs to the complex I subunit 2 family. NDH-1 is composed of 15 different subunits. Subunits NuoA, H, J, K, L, M, N constitute the membrane sector of the complex.

The protein localises to the cell membrane. It carries out the reaction a quinone + NADH + 5 H(+)(in) = a quinol + NAD(+) + 4 H(+)(out). Functionally, NDH-1 shuttles electrons from NADH, via FMN and iron-sulfur (Fe-S) centers, to quinones in the respiratory chain. The immediate electron acceptor for the enzyme in this species is believed to be a menaquinone. Couples the redox reaction to proton translocation (for every two electrons transferred, four hydrogen ions are translocated across the cytoplasmic membrane), and thus conserves the redox energy in a proton gradient. The protein is NADH-quinone oxidoreductase subunit N of Deinococcus radiodurans (strain ATCC 13939 / DSM 20539 / JCM 16871 / CCUG 27074 / LMG 4051 / NBRC 15346 / NCIMB 9279 / VKM B-1422 / R1).